The chain runs to 416 residues: MGYPKAFTSSDSEPEPDLSRDLGNPVMGNPGVVSRSSSTVAQHSVRNNPTGPDGRLAGLWNARALLRFPAEVNGVRLDFKSVSSRRPTSRLSLLPYSLCSICPSSQATMTSKDHVKSQIPRLSAINDLHKIWPTVEEHGAAIIESFLSLDIVRRLNEEVDPFVKIEPIPAAKTKDHPNHVLSTTTRLVNVLAPISKAYREDVLNSKVLHRICSDAFHVYGDYWVLMGAVMELAPSNPAQPLHRDMRFSHPIVEYLKPDAPATSINFLVALSPFTAENGATHVILGSHKWQNLSNVSMDATVRALMNPGDALLITDSTIHCGGAETTGTETRRLLTITMGISQLTPLESNLAVPRPVIESLTPLAQRLLGWASQRSAAPRDIGLLTIRGNSIEKTMNLKAEQPLHDDEAEPLCRETI.

The interval 1 to 53 (MGYPKAFTSSDSEPEPDLSRDLGNPVMGNPGVVSRSSSTVAQHSVRNNPTGPD) is disordered. Over residues 34–50 (SRSSSTVAQHSVRNNPT) the composition is skewed to polar residues. Positions 242, 244, and 319 each coordinate Fe cation.

Belongs to the PhyH family. Homodimer. Fe cation serves as cofactor.

It catalyses the reaction (-)-4'-methoxycyclopeptine + 2-oxoglutarate + O2 = (Z)-4'-methoxydehydrocyclopeptine + succinate + CO2 + H2O. The catalysed reaction is (Z)-4'-methoxydehydrocyclopeptine + 2-oxoglutarate + O2 = (-)-4'-methoxycyclopenine + succinate + CO2. The enzyme catalyses (-)-cyclopeptine + 2-oxoglutarate + O2 = (Z)-dehydrocyclopeptine + succinate + CO2 + H2O. It carries out the reaction (Z)-dehydrocyclopeptine + 2-oxoglutarate + O2 = (-)-cyclopenine + succinate + CO2. It participates in secondary metabolite biosynthesis. It functions in the pathway alkaloid biosynthesis. Its pathway is mycotoxin biosynthesis. Functionally, iron/alpha-ketoglutarate-dependent dioxygenase; part of the gene cluster that mediates the biosynthesis of the aspoquinolone mycotoxins. Within the pathway, the iron/alpha-ketoglutarate-dependent dioxygenase asqJ acts as a (-)-cyclopenine synthase that converts 4'-methoxycyclopeptin into 4'-methoxydehydrocyclopeptin through dehydrogenation to form a double bond between C-alpha and C-beta of the O-methyltyrosine side chain. AsqJ is a very unique dioxygenase which is capable of catalyzing radical-mediated dehydrogenation and epoxidation reactions sequentially on a 6,7-benzo-diazepinedione substrate in the 4'-methoxyviridicatin biosynthetic pathway. AsqJ is also capable of converting cyclopeptin into dehydrocyclopeptin. The first step of the pathway is catalyzed by the nonribosomal peptide synthetase asqK that condenses anthranilic acid and O-methyl-L-tyrosine to produce 4'-methoxycyclopeptin. 4'-methoxycyclopeptin is then converted to 4'-methoxydehydrocyclopeptin by the ketoglutarate-dependent dioxygenase asqJ. AsqJ also converts its first product 4'-methoxydehydrocyclopeptin to 4'-methoxycyclopenin. The following conversion of 4'-methoxycyclopenin into 4'-methoxyviridicatin is catalyzed by the cyclopenase asqI. 4'-methoxyviridicatin is the precursor of quinolone natural products, and is further converted to quinolinone B. The prenyltransferase asqH1 then catalyzes the canonical Friedel-Crafts alkylation of quinolinone B with dimethylallyl cation to yield dimethylallyl quinolone, which is subjected to FAD-dependent dehydrogenation by the FAD-linked oxidoreductase asqF to yield conjugated aryl diene. The delta(3') double bond then serves as the site of the second alkylation with DMAPP catalyzed by the prenyltransferase asqH2 to yield a carbenium ion intermediate, which can be attacked by H(2)O to yield a styrenyl quinolone containing a C3'-hydroxyprenyl chain. The FAD-dependent monooxygenase asqG performs epoxidation of the terminal C7'-C8' olefin. Finally, after dehydratation of the epoxide at C3 by asqC, the quinolone epoxide rearrangement protein asqO catalyzes an enzymatic 3-exo-tet cyclization to yield the cyclopropyl-THF ring system in aspoquinolone. This chain is Iron/alpha-ketoglutarate-dependent dioxygenase asqJ, found in Emericella nidulans (strain FGSC A4 / ATCC 38163 / CBS 112.46 / NRRL 194 / M139) (Aspergillus nidulans).